A 290-amino-acid chain; its full sequence is Acetyl-coenzyme A carboxylase carboxyl transferase subunit beta (290 aa).

The CoA carboxyltransferase N-terminal domain maps to Leu-27 to Ala-290. Zn(2+)-binding residues include Cys-31, Cys-34, Cys-50, and Cys-53. Residues Cys-31–Cys-53 form a C4-type zinc finger.

This sequence belongs to the AccD/PCCB family. Acetyl-CoA carboxylase is a heterohexamer composed of biotin carboxyl carrier protein (AccB), biotin carboxylase (AccC) and two subunits each of ACCase subunit alpha (AccA) and ACCase subunit beta (AccD). Zn(2+) serves as cofactor.

It is found in the cytoplasm. It carries out the reaction N(6)-carboxybiotinyl-L-lysyl-[protein] + acetyl-CoA = N(6)-biotinyl-L-lysyl-[protein] + malonyl-CoA. Its pathway is lipid metabolism; malonyl-CoA biosynthesis; malonyl-CoA from acetyl-CoA: step 1/1. In terms of biological role, component of the acetyl coenzyme A carboxylase (ACC) complex. Biotin carboxylase (BC) catalyzes the carboxylation of biotin on its carrier protein (BCCP) and then the CO(2) group is transferred by the transcarboxylase to acetyl-CoA to form malonyl-CoA. In Pseudomonas aeruginosa (strain UCBPP-PA14), this protein is Acetyl-coenzyme A carboxylase carboxyl transferase subunit beta.